Here is a 209-residue protein sequence, read N- to C-terminus: ADP-ribose pyrophosphatase (209 aa).

Substrate-binding positions include 28-29 (FF), 51-52 (RE), arginine 56, and arginine 79. Positions 55-193 (ERGHAAVLLP…KIDNAASVIA (139 aa)) constitute a Nudix hydrolase domain. Alanine 96 contributes to the Mg(2+) binding site. The Nudix box motif lies at 97 to 118 (GMIEEGESVEDVARREAIEEAG). Residue methionine 98 participates in substrate binding. 2 residues coordinate Mg(2+): glutamate 112 and glutamate 116. Residues 133–135 (SPG) and glutamate 139 contribute to the substrate site. Glutamate 162 serves as the catalytic Proton acceptor. Position 164 (glutamate 164) interacts with Mg(2+).

Belongs to the Nudix hydrolase family. NudF subfamily. In terms of assembly, homodimer. Requires Mg(2+) as cofactor.

It catalyses the reaction ADP-D-ribose + H2O = D-ribose 5-phosphate + AMP + 2 H(+). Inhibited by phosphorylated compounds such as AMP, ADP, ATP, 3-phosphoglyceric acid and PPi. Not inhibited by orthophosphate. Activity is high in cells grown in low glucose concentrations and decreases dramatically as glucose concentration increases. Acts on ADP-mannose and ADP-glucose as well as ADP-ribose. Prevents glycogen biosynthesis. The reaction catalyzed by this enzyme is a limiting step of the gluconeogenic process. This is ADP-ribose pyrophosphatase (nudF) from Escherichia coli O157:H7.